The chain runs to 429 residues: uncharacterized protein (429 aa).

Helical transmembrane passes span 27–47, 48–68, 78–98, 106–126, 142–162, 198–218, 219–239, 249–269, 288–308, 351–371, and 399–419; these read PFFFLFCLFIPFDNTSLQSIG, GIMTASPSALILLPGLFVSIL, ILLCFFGVLLISFLYYFYWVF, IFILDRGSRYFLLYVFYFLAL, ALIIIVVIFSVLLNYLDPAII, LLLAVLLNWSTFFLVTVTIVI, AILTTSKGAALSFLICICFYF, VLLSLCSIVISYIIFKYYFLD, FIVGLKIFLFNPLGVGFFGYL, LILDLLIIYGVFFLIPFIYFI, and FFISHLGSYFTPFCIAFLIIL.

The protein localises to the cell membrane. Its function is as follows. May function as a transporter. This is an uncharacterized protein from Klebsiella pneumoniae.